We begin with the raw amino-acid sequence, 313 residues long: Protein FixB (313 aa).

255 to 283 (LYLAVGISGQIQHMVGANASQTIFAINKD) contributes to the FAD binding site.

The protein belongs to the ETF alpha-subunit/FixB family. As to quaternary structure, heterodimer of FixA and FixB.

It functions in the pathway amine and polyamine metabolism; carnitine metabolism. Required for anaerobic carnitine reduction. May bring reductant to CaiA. This Escherichia coli O8 (strain IAI1) protein is Protein FixB.